The chain runs to 276 residues: Ribosomal RNA small subunit methyltransferase A (276 aa).

The S-adenosyl-L-methionine site is built by Asn-15, Leu-17, Gly-42, Glu-63, Asp-88, and Asn-111.

The protein belongs to the class I-like SAM-binding methyltransferase superfamily. rRNA adenine N(6)-methyltransferase family. RsmA subfamily.

Its subcellular location is the cytoplasm. It carries out the reaction adenosine(1518)/adenosine(1519) in 16S rRNA + 4 S-adenosyl-L-methionine = N(6)-dimethyladenosine(1518)/N(6)-dimethyladenosine(1519) in 16S rRNA + 4 S-adenosyl-L-homocysteine + 4 H(+). Specifically dimethylates two adjacent adenosines (A1518 and A1519) in the loop of a conserved hairpin near the 3'-end of 16S rRNA in the 30S particle. May play a critical role in biogenesis of 30S subunits. The polypeptide is Ribosomal RNA small subunit methyltransferase A (Geobacter sulfurreducens (strain ATCC 51573 / DSM 12127 / PCA)).